Consider the following 759-residue polypeptide: Solute carrier family 26 member 6 (759 aa).

The Cytoplasmic segment spans residues 1-115; the sequence is MGLADASGPR…PQGLAYALLA (115 aa). A helical membrane pass occupies residues 116-136; sequence GLPPVFGLYSSFYPVFIYFLF. Residues 137–186 are Extracellular-facing; it reads GTSRHISVGTFAVMSVMVGSVTESLAPQALNDSMINETARDAARVQVAST. 2 N-linked (GlcNAc) asparagine glycosylation sites follow: Asn-167 and Asn-172. Residues 187–207 form a helical membrane-spanning segment; that stretch reads LSVLVGLFQVGLGLIHFGFVV. At 208 to 263 the chain is on the cytoplasmic side; the sequence is TYLSEPLVRGYTTAAAVQVFVSQLKYVFGLHLSSHSGPLSLIYTVLEVCWKLPQSK. A helical transmembrane segment spans residues 264–284; that stretch reads VGTVVTAAVAGVVLVVVKLLN. Residues 285–293 are Extracellular-facing; sequence DKLQQQLPM. Residues 294 to 314 form a helical membrane-spanning segment; that stretch reads PIPGELLTLIGATGISYGMGL. At 315 to 347 the chain is on the cytoplasmic side; the sequence is KHRFEVDVVGNIPAGLVPPVAPNTQLFSKLVGS. Residues 348 to 368 traverse the membrane as a helical segment; it reads AFTIAVVGFAIAISLGKIFAL. Residues 369-379 lie on the Extracellular side of the membrane; it reads RHGYRVDSNQE. The chain crosses the membrane as a helical span at residues 380–400; that stretch reads LVALGLSNLIGGIFQCFPVSC. Residues 401-416 are Cytoplasmic-facing; that stretch reads SMSRSLVQESTGGNSQ. Residues 417 to 437 form a helical membrane-spanning segment; that stretch reads VAGAISSLFILLIIVKLGELF. At 438–484 the chain is on the extracellular side; sequence HDLPKAVLAAIIIVNLKGMLRQLSDMRSLWKANRADLLIWLVTFTAT. The chain crosses the membrane as a helical span at residues 485-505; that stretch reads ILLNLDLGLVVAVIFSLLLVV. Residues 506 to 759 are Cytoplasmic-facing; it reads VRTQMPHYSV…PDSPVSVTRL (254 aa). Residues 530–742 form the STAS domain; that stretch reads EYSEAKEVRG…ASVHDAVTFA (213 aa). Phosphoserine; by PKC occurs at positions 553 and 582. At Ser-616 the chain carries Phosphoserine. The tract at residues 636–657 is disordered; sequence GDKMEDATANGQEDSKAPDGST. Phosphoserine is present on residues Ser-752 and Ser-755.

This sequence belongs to the SLC26A/SulP transporter (TC 2.A.53) family. In terms of assembly, interacts (via C-terminal domain) with PDZK1 (via C-terminal PDZ domain); the interaction induces chloride and oxalate exchange transport. Interacts with CFTR and SLC26A3. Interacts with AHCYL1; the interaction increases SLC26A6 activity. Interacts with NHERF1 (via the PDZ domains) and NHERF2 (via the PDZ domains). Interacts (via C-terminal cytoplasmic domain) with CA2; the interaction stimulates chloride-bicarbonate exchange activity. As to quaternary structure, interacts with NHERF1 (via the PDZ domains) and NHERF2 (via the PDZ domains). Phosphorylated on serine residues by PKC; the phosphorylation disrupts interaction with carbonic anhydrase CA2 and reduces bicarbonate transport activity in a phorbol myristate acetate (PMA)-induced manner. In terms of processing, glycosylation at Asn-167 and Asn-172 positively regulates its chloride oxalate exchanger activity. In terms of tissue distribution, ubiquitous. Highest levels in kidney and pancreas. Lower expression in heart, skeletal muscle, liver and placenta. Also found in lung and brain. Ubiquitously expressed. Highest levels expressed in the kidney and pancreas. As to expression, expressed weakly in placenta, lung, liver and pancreas. In terms of tissue distribution, expressed in heart, brain, placenta, lung, liver, kidney, pancreas, spleen, thymus, prostate, testis and ovary.

The protein localises to the cell membrane. Its subcellular location is the apical cell membrane. It is found in the cytoplasmic vesicle membrane. The protein resides in the microsome. It localises to the basolateral cell membrane. The catalysed reaction is 2 hydrogencarbonate(in) + chloride(out) = 2 hydrogencarbonate(out) + chloride(in). It catalyses the reaction oxalate(in) + chloride(out) = oxalate(out) + chloride(in). The enzyme catalyses oxalate(in) + formate(out) = oxalate(out) + formate(in). It carries out the reaction oxalate(in) + sulfate(out) = oxalate(out) + sulfate(in). The catalysed reaction is 2 hydrogencarbonate(out) + sulfate(in) = 2 hydrogencarbonate(in) + sulfate(out). Oxalate transport activity is inhibited by 4,4'-diisothiocyanatostilbene-2,2'-disulfonic acid (DIDS). Its activity is regulated as follows. Chloride, bicarbonate and sulfate transport activities are inhibited by 4,4'-diisothiocyanatostilbene-2,2'-disulfonic acid (DIDS). Apical membrane anion-exchanger with wide epithelial distribution that plays a role as a component of the pH buffering system for maintaining acid-base homeostasis. Acts as a versatile DIDS-sensitive inorganic and organic anion transporter that mediates the uptake of monovalent anions like chloride, bicarbonate, formate and hydroxyl ion and divalent anions like sulfate and oxalate. Functions in multiple exchange modes involving pairs of these anions, which include chloride-bicarbonate, chloride-oxalate, oxalate-formate, oxalate-sulfate and chloride-formate exchange. Apical membrane chloride-bicarbonate exchanger that mediates luminal chloride absorption and bicarbonate secretion by the small intestinal brush border membrane and contributes to intracellular pH regulation in the duodenal upper villous epithelium during proton-coupled peptide absorption, possibly by providing a bicarbonate import pathway. Also mediates intestinal chloride absorption and oxalate secretion, thereby preventing hyperoxaluria and calcium oxalate urolithiasis. Transepithelial oxalate secretion, chloride-formate, chloride-oxalate and chloride-bicarbonate transport activities in the duodenum are inhibited by PKC activation in a calcium-independent manner. The apical membrane chloride-bicarbonate exchanger also provides a major route for fluid and bicarbonate secretion into the proximal tubules of the kidney as well as into the proximal part of the interlobular pancreatic ductal tree, where it mediates electrogenic chloride-bicarbonate exchange with a chloride-bicarbonate stoichiometry of 1:2, and hence will dilute and alkalinize protein-rich acinar secretion. Also mediates the transcellular sulfate absorption and oxalate secretion across the apical membrane in the duodenum and the formate ion efflux at the apical brush border of cells in the proximal tubules of kidney. Plays a role in sperm capacitation by increasing intracellular pH. In terms of biological role, apical membrane chloride-bicarbonate exchanger. Its association with carbonic anhydrase CA2 forms a bicarbonate transport metabolon; hence maximizes the local concentration of bicarbonate at the transporter site. The chain is Solute carrier family 26 member 6 (SLC26A6) from Homo sapiens (Human).